The sequence spans 132 residues: Myelin P2 protein (132 aa).

N-acetylserine is present on S2. (9Z)-octadecenoate contacts are provided by residues R107 and 127-129 (RIY). Residues R107 and 127–129 (RIY) contribute to the hexadecanoate site.

It belongs to the calycin superfamily. Fatty-acid binding protein (FABP) family. In terms of assembly, monomer.

The protein resides in the cytoplasm. Its function is as follows. May play a role in lipid transport protein in Schwann cells. May bind cholesterol. The polypeptide is Myelin P2 protein (PMP2) (Oryctolagus cuniculus (Rabbit)).